The primary structure comprises 452 residues: Retinoid-inducible serine carboxypeptidase (452 aa).

The first 28 residues, 1–28 (MELSRRICLVRLWLLLLSFLLGFSAGSA), serve as a signal peptide directing secretion. Residues Asn64, Asn102, and Asn126 are each glycosylated (N-linked (GlcNAc...) asparagine). Residue Ser167 is part of the active site. Asn192 and Asn362 each carry an N-linked (GlcNAc...) asparagine glycan. Catalysis depends on residues Asp371 and His431.

Belongs to the peptidase S10 family. In terms of tissue distribution, highly expressed in aorta, bladder, and kidney with much lower levels in all other tissues analyzed. Expression in kidney is restricted to proximal convoluted tubules.

Its subcellular location is the secreted. Functionally, may be involved in vascular wall and kidney homeostasis. In Rattus norvegicus (Rat), this protein is Retinoid-inducible serine carboxypeptidase (Scpep1).